The sequence spans 66 residues: Cold shock protein CspA (66 aa).

In terms of domain architecture, CSD spans 1–66; it reads MKQGTVKWFN…GPQAANVVKL (66 aa).

The protein resides in the cytoplasm. In terms of biological role, involved in cold stress response. In Staphylococcus haemolyticus (strain JCSC1435), this protein is Cold shock protein CspA (cspA).